A 68-amino-acid polypeptide reads, in one-letter code: Large ribosomal subunit protein uL29 (68 aa).

This sequence belongs to the universal ribosomal protein uL29 family.

The sequence is that of Large ribosomal subunit protein uL29 from Albidiferax ferrireducens (strain ATCC BAA-621 / DSM 15236 / T118) (Rhodoferax ferrireducens).